The sequence spans 538 residues: Dolichol kinase (538 aa).

Topologically, residues 1-13 (MTRECPSPAPGPG) are lumenal. The helical transmembrane segment at 14 to 34 (APLSGSVLAEAAVVFAVVLSI) threads the bilayer. The Cytoplasmic segment spans residues 35-74 (HATVWDRYSWCAVALAVQAFYVQYKWDRLLQQGSAVFQFR). A helical membrane pass occupies residues 75 to 95 (MSANSGLLPASMVMPLLGLVM). Residues 96–111 (KERCQTAGNPFFERFG) lie on the Lumenal side of the membrane. A helical membrane pass occupies residues 112-132 (IVVAATGMAVALFSSVLALGI). At 133 to 134 (TR) the chain is on the cytoplasmic side. A helical membrane pass occupies residues 135–155 (PVPTNTCVILGLAGGVIIYIM). Topologically, residues 156 to 163 (KHSLSVGE) are lumenal. A helical transmembrane segment spans residues 164 to 184 (VIEVLEVLLIFVYLNMILLYL). Topologically, residues 185-188 (LPRC) are cytoplasmic. A helical transmembrane segment spans residues 189–209 (FTPGEALLVLGGISFVLNQLI). Over 210 to 224 (KRSLTLVESQGDPVD) the chain is Lumenal. Residues 225–245 (FFLLVVVVGMVLMGIFFSTLF) traverse the membrane as a helical segment. At 246-254 (VFMDSGTWA) the chain is on the cytoplasmic side. The helical transmembrane segment at 255 to 275 (SSIFFHLMTCVLSLGVVLPWL) threads the bilayer. Topologically, residues 276-297 (HRLIRRNPLLWLLQFLFQTDTR) are lumenal. The chain crosses the membrane as a helical span at residues 298-318 (IYLLAYWSLLATLACLVVLYQ). The Cytoplasmic segment spans residues 319-337 (NAKRSSSESKKHQAPTIAR). A helical membrane pass occupies residues 338-354 (KYFHLIVVATYIPGIIF). The Lumenal segment spans residues 355–359 (DRPLL). Residues 360 to 380 (YVAATVCLAVFIFLEYVRYFR) traverse the membrane as a helical segment. Topologically, residues 381 to 401 (IKPLGHTLRSFLSLFLDERDS) are cytoplasmic. The helical transmembrane segment at 402–422 (GPLILTHIYLLLGMSLPIWLI) threads the bilayer. At 423–436 (PRPCTQKGSLGGAR) the chain is on the lumenal side. Residues 437–457 (ALVPYAGVLAVGVGDTVASIF) form a helical membrane-spanning segment. At 458–472 (GSTMGEIRWPGTKKT) the chain is on the cytoplasmic side. The segment at 459 to 474 (STMGEIRWPGTKKTFE) is CTP-binding. The helical transmembrane segment at 473-493 (FEGTMTSIFAQIISVALILIF) threads the bilayer. Over 494-495 (DS) the chain is Lumenal. The chain crosses the membrane as a helical span at residues 496-516 (GVDLNYSYAWILGSISTVSLL). Residues 517 to 538 (EAYTTQIDNLLLPLYLLILLMA) lie on the Cytoplasmic side of the membrane.

It belongs to the polyprenol kinase family. Ubiquitous.

It is found in the endoplasmic reticulum membrane. It carries out the reaction a di-trans,poly-cis-dolichol + CTP = a di-trans,poly-cis-dolichyl phosphate + CDP + H(+). Its pathway is protein modification; protein glycosylation. In terms of biological role, catalyzes CTP-mediated phosphorylation of dolichol, the terminal step in de novo dolichyl monophosphate (Dol-P) biosynthesis. Dol-P is a lipid carrier essential for the synthesis of N-linked and O-linked oligosaccharides and for GPI anchors. This Homo sapiens (Human) protein is Dolichol kinase (DOLK).